The following is a 354-amino-acid chain: MKKIIMTGGGTAGHVTPNLALVPELKKSGYEIKYIGSIEGIERKIIEKEGIEYFPISSGKLRRYFDLKNFSDPFKVLKGVFQAKKIIKREKPDIVFSKGGFVTVPVVIAAHLNKIPVIAHESDITPGLANKLATPYCTRVCVTFPESVKHIKGDKAVLTGTPIRRELLEGNKLEGIKLCGFKDNKPILLIIGGSLGSKIINEIVRKNLDNILSKFNIIHICGKSNLDENLENRKGYAQFEYVNEELPDLMKASDLVISRAGANVIYELLALKKPNLLIPLSKKSSRGDQILNAASFEKSGYSLVLKEEELEDKTLMKKLNYLYENRNVYINNMSKSKMDNGVKNITELIKKYTK.

Residues 11–13, Arg164, Ser194, and Gln289 each bind UDP-N-acetyl-alpha-D-glucosamine; that span reads TAG.

It belongs to the glycosyltransferase 28 family. MurG subfamily.

It localises to the cell membrane. The enzyme catalyses di-trans,octa-cis-undecaprenyl diphospho-N-acetyl-alpha-D-muramoyl-L-alanyl-D-glutamyl-meso-2,6-diaminopimeloyl-D-alanyl-D-alanine + UDP-N-acetyl-alpha-D-glucosamine = di-trans,octa-cis-undecaprenyl diphospho-[N-acetyl-alpha-D-glucosaminyl-(1-&gt;4)]-N-acetyl-alpha-D-muramoyl-L-alanyl-D-glutamyl-meso-2,6-diaminopimeloyl-D-alanyl-D-alanine + UDP + H(+). The protein operates within cell wall biogenesis; peptidoglycan biosynthesis. Functionally, cell wall formation. Catalyzes the transfer of a GlcNAc subunit on undecaprenyl-pyrophosphoryl-MurNAc-pentapeptide (lipid intermediate I) to form undecaprenyl-pyrophosphoryl-MurNAc-(pentapeptide)GlcNAc (lipid intermediate II). This is UDP-N-acetylglucosamine--N-acetylmuramyl-(pentapeptide) pyrophosphoryl-undecaprenol N-acetylglucosamine transferase from Clostridium botulinum (strain Langeland / NCTC 10281 / Type F).